We begin with the raw amino-acid sequence, 69 residues long: Sec-independent protein translocase protein TatA (69 aa).

A helical membrane pass occupies residues 1 to 21 (MFPKLGMGELVVILLIVVILF). The segment at 43–69 (SFSGEDEEKPSTPGATSSDEASKAKQA) is disordered.

Belongs to the TatA/E family. In terms of assembly, the Tat system comprises two distinct complexes: a TatABC complex, containing multiple copies of TatA, TatB and TatC subunits, and a separate TatA complex, containing only TatA subunits. Substrates initially bind to the TatABC complex, which probably triggers association of the separate TatA complex to form the active translocon.

It is found in the cell inner membrane. Functionally, part of the twin-arginine translocation (Tat) system that transports large folded proteins containing a characteristic twin-arginine motif in their signal peptide across membranes. TatA could form the protein-conducting channel of the Tat system. This Anaeromyxobacter sp. (strain Fw109-5) protein is Sec-independent protein translocase protein TatA.